The following is a 174-amino-acid chain: Small ribosomal subunit protein uS5c (174 aa).

One can recognise an S5 DRBM domain in the interval 17 to 80 (WEERVVQVKR…TDAKKHLVTV (64 aa)).

Belongs to the universal ribosomal protein uS5 family. In terms of assembly, part of the 30S ribosomal subunit. Contacts protein S4.

It is found in the plastid. The protein resides in the chloroplast. Functionally, with S4 and S12 plays an important role in translational accuracy. In Pyropia yezoensis (Susabi-nori), this protein is Small ribosomal subunit protein uS5c (rps5).